Consider the following 274-residue polypeptide: Formamidopyrimidine-DNA glycosylase (274 aa).

Pro2 acts as the Schiff-base intermediate with DNA in catalysis. Glu3 acts as the Proton donor in catalysis. Lys59 (proton donor; for beta-elimination activity) is an active-site residue. The DNA site is built by His93, Arg112, and Arg155. An FPG-type zinc finger spans residues 240–274 (QVYGRTGRPCPRCGQPLERVRLGGRSTHFCPRCQV). The active-site Proton donor; for delta-elimination activity is Arg264.

Belongs to the FPG family. As to quaternary structure, monomer. The cofactor is Zn(2+).

It catalyses the reaction Hydrolysis of DNA containing ring-opened 7-methylguanine residues, releasing 2,6-diamino-4-hydroxy-5-(N-methyl)formamidopyrimidine.. The enzyme catalyses 2'-deoxyribonucleotide-(2'-deoxyribose 5'-phosphate)-2'-deoxyribonucleotide-DNA = a 3'-end 2'-deoxyribonucleotide-(2,3-dehydro-2,3-deoxyribose 5'-phosphate)-DNA + a 5'-end 5'-phospho-2'-deoxyribonucleoside-DNA + H(+). Functionally, involved in base excision repair of DNA damaged by oxidation or by mutagenic agents. Acts as a DNA glycosylase that recognizes and removes damaged bases. Has a preference for oxidized purines, such as 7,8-dihydro-8-oxoguanine (8-oxoG). Has AP (apurinic/apyrimidinic) lyase activity and introduces nicks in the DNA strand. Cleaves the DNA backbone by beta-delta elimination to generate a single-strand break at the site of the removed base with both 3'- and 5'-phosphates. This chain is Formamidopyrimidine-DNA glycosylase, found in Moorella thermoacetica (strain ATCC 39073 / JCM 9320).